The following is a 289-amino-acid chain: UPF0276 protein BB1291 (289 aa).

Belongs to the UPF0276 family.

This chain is UPF0276 protein BB1291, found in Bordetella bronchiseptica (strain ATCC BAA-588 / NCTC 13252 / RB50) (Alcaligenes bronchisepticus).